A 221-amino-acid polypeptide reads, in one-letter code: Protein GrpE 1 (221 aa).

Disordered regions lie at residues 1 to 44 and 192 to 221; these read MTEE…AAAQ and VAEPQPGAQTVKADEAEAADDKESGGPEEG. Over residues 26–44 the composition is skewed to low complexity; it reads KAAPSEGAAPAGDAAAAAQ. Basic and acidic residues predominate over residues 203–221; the sequence is KADEAEAADDKESGGPEEG.

The protein belongs to the GrpE family. In terms of assembly, homodimer.

The protein resides in the cytoplasm. Its function is as follows. Participates actively in the response to hyperosmotic and heat shock by preventing the aggregation of stress-denatured proteins, in association with DnaK and GrpE. It is the nucleotide exchange factor for DnaK and may function as a thermosensor. Unfolded proteins bind initially to DnaJ; upon interaction with the DnaJ-bound protein, DnaK hydrolyzes its bound ATP, resulting in the formation of a stable complex. GrpE releases ADP from DnaK; ATP binding to DnaK triggers the release of the substrate protein, thus completing the reaction cycle. Several rounds of ATP-dependent interactions between DnaJ, DnaK and GrpE are required for fully efficient folding. In Streptomyces avermitilis (strain ATCC 31267 / DSM 46492 / JCM 5070 / NBRC 14893 / NCIMB 12804 / NRRL 8165 / MA-4680), this protein is Protein GrpE 1.